The chain runs to 34 residues: Photosystem II reaction center protein M (34 aa).

A helical membrane pass occupies residues 5–25 (ILAFIATALFILVPTAFLLII).

Belongs to the PsbM family. In terms of assembly, PSII is composed of 1 copy each of membrane proteins PsbA, PsbB, PsbC, PsbD, PsbE, PsbF, PsbH, PsbI, PsbJ, PsbK, PsbL, PsbM, PsbT, PsbX, PsbY, PsbZ, Psb30/Ycf12, at least 3 peripheral proteins of the oxygen-evolving complex and a large number of cofactors. It forms dimeric complexes.

It is found in the plastid. The protein resides in the chloroplast thylakoid membrane. In terms of biological role, one of the components of the core complex of photosystem II (PSII). PSII is a light-driven water:plastoquinone oxidoreductase that uses light energy to abstract electrons from H(2)O, generating O(2) and a proton gradient subsequently used for ATP formation. It consists of a core antenna complex that captures photons, and an electron transfer chain that converts photonic excitation into a charge separation. This subunit is found at the monomer-monomer interface. The polypeptide is Photosystem II reaction center protein M (Phaseolus vulgaris (Kidney bean)).